The chain runs to 44 residues: Cuticle protein CP463 (44 aa).

2 repeat units span residues 3–20 and 27–44.

As to expression, calcified shell.

This Cancer pagurus (Rock crab) protein is Cuticle protein CP463.